Here is a 169-residue protein sequence, read N- to C-terminus: Phosphopantetheine adenylyltransferase (169 aa).

Substrate is bound at residue T9. Residues T9–F10 and H17 contribute to the ATP site. 3 residues coordinate substrate: K41, L73, and R87. ATP is bound by residues G88 to R90, E98, and Y123 to T129.

It belongs to the bacterial CoaD family. As to quaternary structure, homohexamer. Mg(2+) is required as a cofactor.

Its subcellular location is the cytoplasm. It carries out the reaction (R)-4'-phosphopantetheine + ATP + H(+) = 3'-dephospho-CoA + diphosphate. Its pathway is cofactor biosynthesis; coenzyme A biosynthesis; CoA from (R)-pantothenate: step 4/5. In terms of biological role, reversibly transfers an adenylyl group from ATP to 4'-phosphopantetheine, yielding dephospho-CoA (dPCoA) and pyrophosphate. The polypeptide is Phosphopantetheine adenylyltransferase (Bordetella bronchiseptica (strain ATCC BAA-588 / NCTC 13252 / RB50) (Alcaligenes bronchisepticus)).